We begin with the raw amino-acid sequence, 68 residues long: Large ribosomal subunit protein bL31 (68 aa).

Zn(2+)-binding residues include C17, C19, C37, and C40.

It belongs to the bacterial ribosomal protein bL31 family. Type A subfamily. In terms of assembly, part of the 50S ribosomal subunit. Requires Zn(2+) as cofactor.

Functionally, binds the 23S rRNA. The protein is Large ribosomal subunit protein bL31 of Dehalococcoides mccartyi (strain ATCC BAA-2266 / KCTC 15142 / 195) (Dehalococcoides ethenogenes (strain 195)).